The following is a 311-amino-acid chain: Probable manganese-dependent inorganic pyrophosphatase (311 aa).

Mn(2+) is bound by residues His-9, Asp-13, Asp-15, Asp-77, His-99, and Asp-151.

It belongs to the PPase class C family. Mn(2+) serves as cofactor.

The protein resides in the cytoplasm. It carries out the reaction diphosphate + H2O = 2 phosphate + H(+). This Streptococcus agalactiae serotype Ia (strain ATCC 27591 / A909 / CDC SS700) protein is Probable manganese-dependent inorganic pyrophosphatase.